Consider the following 479-residue polypeptide: Serine protease HTRA1A (479 aa).

The N-terminal stretch at 1-18 (MILVTLFCICALVTSLQA) is a signal peptide. In terms of domain architecture, IGFBP N-terminal spans 27-111 (VIGGCPSHCD…RGKQGVCVCK (85 aa)). Intrachain disulfides connect C31/C56, C35/C58, C40/C59, C47/C62, C70/C87, and C81/C108. Residues 96-155 (SATVRRRGKQGVCVCKSSDPVCGSDGVSYRDICELKRVSNRAQSLQQPPVLFIQRGACGT) form the Kazal-like domain. The tract at residues 203-363 (GSGFVVSDDG…IPSDKIRQFL (161 aa)) is serine protease. Catalysis depends on charge relay system residues H219, D249, and S327. The 103-residue stretch at 364–466 (AESYDRLARG…LRVVVRRGNE (103 aa)) folds into the PDZ domain.

It belongs to the peptidase S1C family. In terms of assembly, forms homotrimers. In the presence of substrate, may form higher-order multimers in a PDZ-independent manner.

It is found in the secreted. The protein resides in the cytoplasm. Its subcellular location is the cytosol. In terms of biological role, serine protease with a variety of targets, including extracellular matrix proteins and proteoglycans. Through cleavage of proteoglycans, may release soluble FGF-glycosaminoglycan complexes that promote the range and intensity of FGF signals in the extracellular space. Regulates the availability of insulin-like growth factors (IGFs) by cleaving IGF-binding proteins. Inhibits signaling mediated by TGF-beta family members. Consequently, may regulate many physiological processes. Intracellularly, degrades TSC2, leading to the activation of TSC2 downstream targets. The polypeptide is Serine protease HTRA1A (htra1a) (Danio rerio (Zebrafish)).